The sequence spans 169 residues: Peptide deformylase (169 aa).

Cys91 and His133 together coordinate Fe cation. The active site involves Glu134. Residue His137 coordinates Fe cation.

It belongs to the polypeptide deformylase family. The cofactor is Fe(2+).

The enzyme catalyses N-terminal N-formyl-L-methionyl-[peptide] + H2O = N-terminal L-methionyl-[peptide] + formate. Functionally, removes the formyl group from the N-terminal Met of newly synthesized proteins. Requires at least a dipeptide for an efficient rate of reaction. N-terminal L-methionine is a prerequisite for activity but the enzyme has broad specificity at other positions. This is Peptide deformylase from Salmonella arizonae (strain ATCC BAA-731 / CDC346-86 / RSK2980).